The chain runs to 489 residues: UDP-N-acetylmuramoyl-L-alanyl-D-glutamate--2,6-diaminopimelate ligase (489 aa).

Residue Ser30 participates in UDP-N-acetyl-alpha-D-muramoyl-L-alanyl-D-glutamate binding. Residue Gly108–Thr114 coordinates ATP. UDP-N-acetyl-alpha-D-muramoyl-L-alanyl-D-glutamate is bound by residues Asn149, Thr150–Thr151, Ser177, Gln183, and Arg185. Lys217 bears the N6-carboxylysine mark. Meso-2,6-diaminopimelate-binding positions include Arg383, Asp407–Arg410, Gly459, and Glu463. Positions Asp407–Arg410 match the Meso-diaminopimelate recognition motif motif.

It belongs to the MurCDEF family. MurE subfamily. The cofactor is Mg(2+). Carboxylation is probably crucial for Mg(2+) binding and, consequently, for the gamma-phosphate positioning of ATP.

The protein resides in the cytoplasm. It carries out the reaction UDP-N-acetyl-alpha-D-muramoyl-L-alanyl-D-glutamate + meso-2,6-diaminopimelate + ATP = UDP-N-acetyl-alpha-D-muramoyl-L-alanyl-gamma-D-glutamyl-meso-2,6-diaminopimelate + ADP + phosphate + H(+). Its pathway is cell wall biogenesis; peptidoglycan biosynthesis. Functionally, catalyzes the addition of meso-diaminopimelic acid to the nucleotide precursor UDP-N-acetylmuramoyl-L-alanyl-D-glutamate (UMAG) in the biosynthesis of bacterial cell-wall peptidoglycan. The chain is UDP-N-acetylmuramoyl-L-alanyl-D-glutamate--2,6-diaminopimelate ligase from Geobacillus thermodenitrificans (strain NG80-2).